Here is a 162-residue protein sequence, read N- to C-terminus: Large ribosomal subunit protein uL15 (162 aa).

The segment at 1–41 (MKLSDIADNAGSRKKRMRVGRGIGSGKGKTAGRGGKGQTAR) is disordered. Gly residues predominate over residues 21 to 37 (RGIGSGKGKTAGRGGKG).

The protein belongs to the universal ribosomal protein uL15 family. In terms of assembly, part of the 50S ribosomal subunit.

Functionally, binds to the 23S rRNA. In Rhodopseudomonas palustris (strain BisB18), this protein is Large ribosomal subunit protein uL15.